The following is a 197-amino-acid chain: Ribonuclease HII (197 aa).

One can recognise an RNase H type-2 domain in the interval 14 to 197 (GIIAGVDEVG…RKNFAPIRIL (184 aa)). Residues D20, E21, and D112 each coordinate a divalent metal cation.

This sequence belongs to the RNase HII family. Requires Mn(2+) as cofactor. It depends on Mg(2+) as a cofactor.

The protein resides in the cytoplasm. The enzyme catalyses Endonucleolytic cleavage to 5'-phosphomonoester.. Functionally, endonuclease that specifically degrades the RNA of RNA-DNA hybrids. This Wolbachia pipientis subsp. Culex pipiens (strain wPip) protein is Ribonuclease HII.